The sequence spans 362 residues: Red-sensitive opsin (362 aa).

The Extracellular segment spans residues 1–49; the sequence is MAAWEAAFAARRRHEEEDTTRDSVFTYTNSNNTRGPFEGPNYHIAPRWV. Residue N31 is glycosylated (N-linked (GlcNAc...) asparagine). The helical transmembrane segment at 50 to 74 threads the bilayer; it reads YNLTSVWMIFVVAASVFTNGLVLVA. Over 75–86 the chain is Cytoplasmic; it reads TWKFKKLRHPLN. Residues 87 to 112 traverse the membrane as a helical segment; the sequence is WILVNLAVADLGETVIASTISVINQI. Topologically, residues 113–126 are extracellular; sequence SGYFILGHPMCVVE. C123 and C200 are oxidised to a cystine. The helical transmembrane segment at 127 to 146 threads the bilayer; that stretch reads GYTVSACGITALWSLAIISW. The Cytoplasmic segment spans residues 147-165; sequence ERWFVVCKPFGNIKFDGKL. The helical transmembrane segment at 166 to 189 threads the bilayer; it reads AVAGILFSWLWSCAWTAPPIFGWS. Over 190 to 215 the chain is Extracellular; the sequence is RYWPHGLKTSCGPDVFSGSSDPGVQS. Residues 216-243 traverse the membrane as a helical segment; it reads YMVVLMVTCCFFPLAIIILCYLQVWLAI. Residues 244–265 lie on the Cytoplasmic side of the membrane; that stretch reads RAVAAQQKESESTQKAEKEVSR. A helical transmembrane segment spans residues 266-289; the sequence is MVVVMIVAYCFCWGPYTFFACFAA. The Extracellular segment spans residues 290–297; it reads ANPGYAFH. A helical membrane pass occupies residues 298 to 322; the sequence is PLAAALPAYFAKSATIYNPIIYVFM. K309 is modified (N6-(retinylidene)lysine). Topologically, residues 323 to 362 are cytoplasmic; the sequence is NRQFRNCILQLFGKKVDDGSEVSTSRTEVSSVSNSSVSPA.

Belongs to the G-protein coupled receptor 1 family. Opsin subfamily. Post-translationally, phosphorylated on some or all of the serine and threonine residues present in the C-terminal region. As to expression, the color pigments are found in the cone photoreceptor cells.

The protein resides in the membrane. Functionally, visual pigments are the light-absorbing molecules that mediate vision. They consist of an apoprotein, opsin, covalently linked to cis-retinal. The sequence is that of Red-sensitive opsin from Gallus gallus (Chicken).